The sequence spans 259 residues: Phosphatidylserine decarboxylase proenzyme (259 aa).

Ser183 functions as the Schiff-base intermediate with substrate; via pyruvic acid in the catalytic mechanism. Ser183 carries the pyruvic acid (Ser); by autocatalysis modification.

It belongs to the phosphatidylserine decarboxylase family. PSD-A subfamily. As to quaternary structure, heterodimer of a large membrane-associated beta subunit and a small pyruvoyl-containing alpha subunit. Pyruvate serves as cofactor. Post-translationally, is synthesized initially as an inactive proenzyme. Formation of the active enzyme involves a self-maturation process in which the active site pyruvoyl group is generated from an internal serine residue via an autocatalytic post-translational modification. Two non-identical subunits are generated from the proenzyme in this reaction, and the pyruvate is formed at the N-terminus of the alpha chain, which is derived from the carboxyl end of the proenzyme. The post-translation cleavage follows an unusual pathway, termed non-hydrolytic serinolysis, in which the side chain hydroxyl group of the serine supplies its oxygen atom to form the C-terminus of the beta chain, while the remainder of the serine residue undergoes an oxidative deamination to produce ammonia and the pyruvoyl prosthetic group on the alpha chain.

It localises to the cell membrane. It carries out the reaction a 1,2-diacyl-sn-glycero-3-phospho-L-serine + H(+) = a 1,2-diacyl-sn-glycero-3-phosphoethanolamine + CO2. It functions in the pathway phospholipid metabolism; phosphatidylethanolamine biosynthesis; phosphatidylethanolamine from CDP-diacylglycerol: step 2/2. In terms of biological role, catalyzes the formation of phosphatidylethanolamine (PtdEtn) from phosphatidylserine (PtdSer). This is Phosphatidylserine decarboxylase proenzyme from Neisseria gonorrhoeae (strain NCCP11945).